Here is a 270-residue protein sequence, read N- to C-terminus: MATFDLRNTPSVTIPAPVQLRNVVRQFGRQRVIDGLDLDIAAGEFVALLGASGSGKTTLLRTLAGLDSIDSGELRVPVARAAVFQEPRLMPWKSAWKNVVLGLRVNDAKARAHAALTEVGLAHRLNAFPATLSGGEAQRVALARGLVREPKLLLLDEPFAALDALTRIRMHQLIIDLWRKHTPAVLLVTHDVDEAILLADRVIVLADGKIADDIRIDLPRQRDSGQAGFQLIRSRLLGLLGVKGAEPDTAPQASAPDSTFSELRRVASAR.

In terms of domain architecture, ABC transporter spans 18–232; it reads VQLRNVVRQF…DSGQAGFQLI (215 aa). 50-57 serves as a coordination point for ATP; sequence GASGSGKT. Residues 247–270 are disordered; that stretch reads PDTAPQASAPDSTFSELRRVASAR. Polar residues predominate over residues 251 to 261; the sequence is PQASAPDSTFS.

It belongs to the ABC transporter superfamily. Aliphatic sulfonates importer (TC 3.A.1.17.2) family. As to quaternary structure, the complex is composed of two ATP-binding proteins (SsuB), two transmembrane proteins (SsuC) and a solute-binding protein (SsuA).

The protein resides in the cell inner membrane. It carries out the reaction ATP + H2O + aliphatic sulfonate-[sulfonate-binding protein]Side 1 = ADP + phosphate + aliphatic sulfonateSide 2 + [sulfonate-binding protein]Side 1.. In terms of biological role, part of the ABC transporter complex SsuABC involved in aliphatic sulfonates import. Responsible for energy coupling to the transport system. This chain is Aliphatic sulfonates import ATP-binding protein SsuB 1, found in Pseudomonas syringae pv. tomato (strain ATCC BAA-871 / DC3000).